Reading from the N-terminus, the 487-residue chain is Cysteine--tRNA ligase (487 aa).

Cys-29 contributes to the Zn(2+) binding site. The 'HIGH' region signature appears at Val-31–His-41. Cys-209, His-234, and Glu-238 together coordinate Zn(2+). Positions Lys-266–Ser-270 match the 'KMSKS' region motif. Lys-269 serves as a coordination point for ATP.

It belongs to the class-I aminoacyl-tRNA synthetase family. As to quaternary structure, monomer. The cofactor is Zn(2+).

Its subcellular location is the cytoplasm. The catalysed reaction is tRNA(Cys) + L-cysteine + ATP = L-cysteinyl-tRNA(Cys) + AMP + diphosphate. The polypeptide is Cysteine--tRNA ligase (Trichlorobacter lovleyi (strain ATCC BAA-1151 / DSM 17278 / SZ) (Geobacter lovleyi)).